A 95-amino-acid chain; its full sequence is Protein TusB (95 aa).

Belongs to the DsrH/TusB family. In terms of assembly, heterohexamer, formed by a dimer of trimers. The hexameric TusBCD complex contains 2 copies each of TusB, TusC and TusD. The TusBCD complex interacts with TusE.

Its subcellular location is the cytoplasm. Part of a sulfur-relay system required for 2-thiolation of 5-methylaminomethyl-2-thiouridine (mnm(5)s(2)U) at tRNA wobble positions. The sequence is that of Protein TusB from Shigella flexneri.